A 71-amino-acid polypeptide reads, in one-letter code: Exodeoxyribonuclease 7 small subunit (71 aa).

This sequence belongs to the XseB family. As to quaternary structure, heterooligomer composed of large and small subunits.

It is found in the cytoplasm. It carries out the reaction Exonucleolytic cleavage in either 5'- to 3'- or 3'- to 5'-direction to yield nucleoside 5'-phosphates.. Bidirectionally degrades single-stranded DNA into large acid-insoluble oligonucleotides, which are then degraded further into small acid-soluble oligonucleotides. This is Exodeoxyribonuclease 7 small subunit from Streptococcus thermophilus (strain ATCC BAA-250 / LMG 18311).